A 503-amino-acid polypeptide reads, in one-letter code: 5'-3' exonuclease PLD4 (503 aa).

Topologically, residues 1 to 36 (MDKKKEHPEMRIPLQTAVEVSDWPCSTSHDPHSGLG) are cytoplasmic. Residues 37–57 (MVLGMLAVLGLSSVTLILFLW) form a signal-anchor for type II membrane protein membrane-spanning segment. Topologically, residues 58-503 (QGATSFTSHR…RQVPSQDCVW (446 aa)) are lumenal. N-linked (GlcNAc...) asparagine glycosylation is found at asparagine 89, asparagine 148, and asparagine 169. Cysteine 92 and cysteine 248 are oxidised to a cystine. The 28-residue stretch at 207-234 (TGGVLHSKFWVVDGRHIYVGSANMDWRS) folds into the PLD phosphodiesterase 1 domain. Catalysis depends on residues histidine 212, lysine 214, and aspartate 219. Histidine 212 serves as the catalytic Proton donor. N-linked (GlcNAc...) asparagine glycosylation is found at asparagine 247, asparagine 279, asparagine 415, and asparagine 425. Cysteine 377 and cysteine 501 are disulfide-bonded. A PLD phosphodiesterase 2 domain is found at 421–447 (FSRVNHSKFMVTDKTAYVGTSNWSEDY). Active-site residues include histidine 426, lysine 428, and aspartate 433. Histidine 426 functions as the Nucleophile in the catalytic mechanism. A glycan (N-linked (GlcNAc...) asparagine) is linked at asparagine 442.

It belongs to the phospholipase D family. In terms of processing, highly N-glycosylated. Enriched in the white matter of early postnatal brains, as well as in splenic marginal zone cells. Highly expressed in dendritic cells (DCs) and other myeloid cells, with lower expression in B cell.

It localises to the endoplasmic reticulum membrane. Its subcellular location is the golgi apparatus. The protein resides in the trans-Golgi network membrane. It is found in the nucleus. The protein localises to the early endosome. It localises to the cytoplasmic vesicle. Its subcellular location is the phagosome. The protein resides in the lysosome. It carries out the reaction Exonucleolytic cleavage in the 5'- to 3'-direction to yield nucleoside 3'-phosphates.. The enzyme catalyses a 5'-end 5'-dephospho-ribonucleotidyl-ribonucleotide-RNA + H2O = a ribonucleoside 3'-phosphate + a 5'-end dephospho-ribonucleoside-RNA + H(+). The catalysed reaction is a ribonucleoside 3'-phosphate-2'-3'-cyclophospho-GMP + H2O = a ribonucleoside 3'-phosphate + 2',3'-cyclophospho-GMP + H(+). It catalyses the reaction a 5'-end 5'-dephospho-2'-deoxyribonucleotidyl-2'-deoxyribonucleotide in single-stranded DNA + H2O = a 5'-end dephospho-2'-deoxyribonucleoside in single-stranded DNA + a 2'-deoxyribonucleoside 3'-phosphate + H(+). It carries out the reaction a 5'-end 5'-phospho-2'-deoxyribonucleotide in single-stranded DNA + H2O = a 5'-end 5'-dephospho-2'-deoxyribonucleotide in single-stranded DNA + phosphate. The enzyme catalyses a 3-lyso-sn-glycero-1-phospho-(3'-acyl-1'-sn-glycerol) + a 1-acyl-sn-glycerol = a 3-acyl-sn-glycero-1-phospho-(3'-acyl-1'-sn-glycerol) + glycerol. The catalysed reaction is 3-lyso-sn-glycero-1-phospho-(3'-(9Z-octadecenoyl)-1'-sn-glycerol) + 1-(9Z-octadecenoyl)-sn-glycerol = 3-(9Z-octadecenoyl)-sn-glycero-1-phospho-(3'-(9Z-octadecenoyl)-1'-sn-glycerol) + glycerol. The exonuclease activity toward ssDNA substrate is Ca(2+) and Mg(2+)-independent, but it is inhibited by Fe(2+), Cu(2+) and to a lesser extent Zn(2+) ions. 5'-&gt;3' exonuclease that hydrolyzes the phosphodiester bond of single-stranded DNA (ssDNA) and RNA molecules to form nucleoside 3'-monophosphates and 5'-end 5'-hydroxy deoxyribonucleotide/ribonucleotide fragments. Partially redundant with PLD4, can cleave all four nucleotides displaying higher efficiency for ssDNA and RNA fragments initiated with uridine and guanosine residues and lower efficiency for cytidine-initiated substrates. As a result, it does not always degrade polynucleotides to the single nucleotide level, it can stall at specific sites sparing certain fragments from exonucleolytic degradation. Processes self and pathogenic ssDNA and RNA molecules that reach the endolysosomal compartment via phagocytosis or autophagy and may serve as 'danger' signals for recognition by innate immune receptors such as toll-like receptors (TLRs). Degrades mitochondrial CpG-rich ssDNA fragments to prevent TLR9 activation and autoinflammatory response, but it can cleave viral RNA to generate ligands for TLR7 activation and initiate antiviral immune responses. In plasmacytoid dendritic cells, it cooperates with endonuclease RNASET2 to release 2',3'-cyclic guanosine monophosphate (2',3'-cGMP), a potent stimulatory ligand for TLR7. Produces 2',3'-cGMPs and cytidine-rich RNA fragments that occupy TLR7 ligand-binding pockets and trigger a signaling-competent state. Can exert polynucleotide phosphatase activity toward 5'-phosphorylated ssDNA substrates although at a slow rate. Transphosphatidylase that catalyzes the exchange with R to S stereo-inversion of the glycerol moiety between (S,R)-lysophosphatidylglycerol (LPG) and monoacylglycerol (MAG) substrates to yield (S,S)-bis(monoacylglycero)phosphate (BMP). Can synthesize a variety of (S,S)-BMPs representing the main phospholipid constituent of lysosomal intralumenal vesicle (ILV) membranes that bind acid hydrolases for lipid degradation. Regulates the homeostasis and interorganellar communication of the endolysosomal system with an overall impact on cellular removal of dysfunctional organelles via autophagy as well as proper protein and lipid turnover. May play a role in myotube formation in response to ER stress. The polypeptide is 5'-3' exonuclease PLD4 (Mus musculus (Mouse)).